The chain runs to 309 residues: MTIPAFHPGELNVYSAPGDVADVSRALRLTGRRVMLVPTMGALHEGHLALVRAAKRVPGSVVVVSIFVNPMQFGAGEDLDAYPRTPDDDLAQLRAEGVEIAFTPTTAAMYPDGLRTTVQPGPLAAELEGGPRPTHFAGVLTVVLKLLQIVRPDRVFFGEKDYQQLVLIRQLVADFNLDVAVVGVPTVREADGLAMSSRNRYLDPAQRAAAVALSAALTAAAHAATAGAQAALDAARAVLDAAPGVAVDYLELRDIGLGPMPLNGSGRLLVAARLGTTRLLDNIAIEIGTFAGTDRPDGYRAILESHWRN.

Thr-2 is subject to N-acetylthreonine. 40–47 (MGALHEGH) lines the ATP pocket. His-47 (proton donor) is an active-site residue. Gln-72 is a binding site for (R)-pantoate. Position 72 (Gln-72) interacts with beta-alanine. Asp-88, Asp-89, and Gln-92 together coordinate Mg(2+). ATP is bound at residue 158–161 (GEKD). Gln-164 contributes to the (R)-pantoate binding site. Residues Val-187 and 195 to 198 (MSSR) contribute to the ATP site.

Belongs to the pantothenate synthetase family.

It is found in the cytoplasm. The enzyme catalyses (R)-pantoate + beta-alanine + ATP = (R)-pantothenate + AMP + diphosphate + H(+). It participates in cofactor biosynthesis; (R)-pantothenate biosynthesis; (R)-pantothenate from (R)-pantoate and beta-alanine: step 1/1. Pantothenate exhibits uncompetitive inhibition toward both D-pantoate and ATP, and non-competitive inhibition toward beta-alanine. AMPCPP exhibits competitive inhibition toward ATP, uncompetitive inhibition toward beta-alanine, and non-competitive inhibition toward D-pantoate. The enzyme is most active in the presence of magnesium or manganese. Other divalent cations (cobalt, nickel, zinc) are less effective. In terms of biological role, catalyzes the condensation of pantoate with beta-alanine in an ATP-dependent reaction via a pantoyl-adenylate intermediate. The protein is Pantothenate synthetase (panC) of Mycobacterium tuberculosis (strain ATCC 25618 / H37Rv).